Consider the following 272-residue polypeptide: Neurogenin-2 (272 aa).

Residues 30-69 (LTPLSSSADEEEEEEPGASGGARRQRGAEAGQGARGGVAA) form a disordered region. The bHLH domain maps to 112–164 (TRRLKANNRERNRMHNLNAALDALREVLPTFPEDAKLTKIETLRFAHNYIWAL). Positions 197 to 239 (ASAALSSSGDSPSPASTWSCTNSPAPSSSVSSNSTSPYSCTLS) are enriched in low complexity. The interval 197–264 (ASAALSSSGD…PPDKHRYAPH (68 aa)) is disordered.

As to quaternary structure, efficient DNA binding requires dimerization with another bHLH protein.

Its subcellular location is the nucleus. Functionally, transcriptional regulator. Involved in neuronal differentiation. Activates transcription by binding to the E box (5'-CANNTG-3'). The chain is Neurogenin-2 (NEUROG2) from Homo sapiens (Human).